Here is a 37-residue protein sequence, read N- to C-terminus: MKVKPSVKRICNKCRVIRRHGRVMVICTDPRHKQRQG.

This sequence belongs to the bacterial ribosomal protein bL36 family.

This Salinispora arenicola (strain CNS-205) protein is Large ribosomal subunit protein bL36.